Consider the following 433-residue polypeptide: Glutamate-1-semialdehyde 2,1-aminomutase (433 aa).

The residue at position 266 (lysine 266) is an N6-(pyridoxal phosphate)lysine.

It belongs to the class-III pyridoxal-phosphate-dependent aminotransferase family. HemL subfamily. Homodimer. Pyridoxal 5'-phosphate serves as cofactor.

The protein resides in the cytoplasm. It catalyses the reaction (S)-4-amino-5-oxopentanoate = 5-aminolevulinate. It participates in porphyrin-containing compound metabolism; protoporphyrin-IX biosynthesis; 5-aminolevulinate from L-glutamyl-tRNA(Glu): step 2/2. This is Glutamate-1-semialdehyde 2,1-aminomutase from Psychrobacter cryohalolentis (strain ATCC BAA-1226 / DSM 17306 / VKM B-2378 / K5).